Consider the following 568-residue polypeptide: MTLRLSRRAYAEMYGPTTGDRIRLADTELLIEVERDHTLYGEEVKFGGGKVIRDGMGQSQLPAADVADTVITNAVILDHWGIVKADIAIKHGRIAAIGKAGNPDIQPGVTIAIGAATEIIAGEGLIVTAGGIDTHIHFISPQQIDEALASGVTTMIGGGTGPATGTNATTCTPGPWHMERMLQAADGWPINLGFLGKGNASRPQPLVEQIEAGAIGLKLHEDWGTTPAAIDNCLTVADDTDTQVAIHTDTLNEAGFVEATVAAFKGRTIHTYHTEGAGGGHAPDILKVCGEANVLPSSTNPTRPYTINTLDEHLDMLMVCHHLDPSIAEDLAFAESRIRRETIAAEDILHDLGALSMLSSDSQAMGRVGEVIIRTWQTAHKMKVQRGALTGDGARNDNFRAKRYVAKYTINPALTHGIAHEVGSIEPGKWADLVLWEPAFFGVKPAMIIKGGMIAVAQMGDPNASIPTPQPVHYREMFATRGGALARTSLTFVSQLALDAGIGARYGLAKRLVPVRGCRTVTKRDMIHNAWQPAIRVDPETYDVVADGALLTCEPAAVLPMAQRYFLF.

The region spanning 130 to 568 (GGIDTHIHFI…LPMAQRYFLF (439 aa)) is the Urease domain. Ni(2+) is bound by residues histidine 135, histidine 137, and lysine 218. Residue lysine 218 is modified to N6-carboxylysine. Histidine 220 lines the substrate pocket. Residues histidine 247 and histidine 273 each contribute to the Ni(2+) site. Histidine 321 acts as the Proton donor in catalysis. Aspartate 361 serves as a coordination point for Ni(2+).

The protein belongs to the metallo-dependent hydrolases superfamily. Urease alpha subunit family. As to quaternary structure, heterotrimer of UreA (gamma), UreB (beta) and UreC (alpha) subunits. Three heterotrimers associate to form the active enzyme. Requires Ni cation as cofactor. Post-translationally, carboxylation allows a single lysine to coordinate two nickel ions.

It localises to the cytoplasm. The catalysed reaction is urea + 2 H2O + H(+) = hydrogencarbonate + 2 NH4(+). It participates in nitrogen metabolism; urea degradation; CO(2) and NH(3) from urea (urease route): step 1/1. In Burkholderia pseudomallei (strain 668), this protein is Urease subunit alpha.